The primary structure comprises 657 residues: Forkhead box protein O3 (657 aa).

2 disordered regions span residues 1–71 (MAEA…EGAA) and 216–320 (SSWW…ELDD). The segment at residues 142-236 (WGNMSYADLI…KGGKAPRRRA (95 aa)) is a DNA-binding region (fork-head). A compositionally biased stretch (basic residues) spans 246-257 (TKSRGRAAKKKA). The segment covering 268-283 (DSPSQLSKWPGSPTSR) has biased composition (polar residues). Basic and acidic residues predominate over residues 284–296 (SSDKLDTWTDFRS). The segment covering 297-307 (RTNSNASTISG) has biased composition (polar residues).

Post-translationally, dephosphorylation may promote translocation to the nucleus where the protein induces transcription of target genes and triggers apoptosis. In terms of tissue distribution, localized to the animal hemisphere during early cleavage stages. At the late neurula, localized in the anterior neural plate, neural crest cells and in the hatching gland. As development progresses, expression becomes less localized, being observed in a variety of organs and tissues including the head, branchial arches and somites by stage 32.

It localises to the cytoplasm. Its subcellular location is the cytosol. The protein resides in the nucleus. Transcriptional activator that recognizes and binds to the DNA sequence 5'-[AG]TAAA[TC]A-3' and regulates different processes, such as apoptosis and autophagy. Acts as a positive regulator of autophagy in skeletal muscle: in starved cells, enters the nucleus following dephosphorylation and binds the promoters of autophagy genes, thereby activating their expression, resulting in proteolysis of skeletal muscle proteins. Triggers apoptosis in the absence of survival factors, including neuronal cell death upon oxidative stress. In response to metabolic stress, translocates into the mitochondria where it promotes mtDNA transcription. Also acts as a key regulator of chondrogenic commitment of skeletal progenitor cells in response to lipid availability: when lipids levels are low, translocates to the nucleus and promotes expression of sox9, which induces chondrogenic commitment and suppresses fatty acid oxidation. Also acts as a key regulator of regulatory T-cells (Treg) differentiation. The chain is Forkhead box protein O3 from Xenopus laevis (African clawed frog).